Consider the following 339-residue polypeptide: Anthranilate phosphoribosyltransferase (339 aa).

5-phospho-alpha-D-ribose 1-diphosphate is bound by residues Gly-80, 83–84 (GD), Thr-88, 90–93 (NIST), 108–116 (KHGNRSVSS), and Ser-120. Anthranilate is bound at residue Gly-80. A Mg(2+)-binding site is contributed by Ser-92. Asn-111 serves as a coordination point for anthranilate. Anthranilate is bound at residue Arg-166. Asp-225 and Glu-226 together coordinate Mg(2+).

The protein belongs to the anthranilate phosphoribosyltransferase family. Homodimer. Mg(2+) is required as a cofactor.

The catalysed reaction is N-(5-phospho-beta-D-ribosyl)anthranilate + diphosphate = 5-phospho-alpha-D-ribose 1-diphosphate + anthranilate. The protein operates within amino-acid biosynthesis; L-tryptophan biosynthesis; L-tryptophan from chorismate: step 2/5. In terms of biological role, catalyzes the transfer of the phosphoribosyl group of 5-phosphorylribose-1-pyrophosphate (PRPP) to anthranilate to yield N-(5'-phosphoribosyl)-anthranilate (PRA). The sequence is that of Anthranilate phosphoribosyltransferase from Alkaliphilus metalliredigens (strain QYMF).